We begin with the raw amino-acid sequence, 338 residues long: DNA-directed RNA polymerase subunit alpha (338 aa).

Positions 1-234 (MIQKNWQELI…DQLQLFINFE (234 aa)) are alpha N-terminal domain (alpha-NTD). Residues 250–338 (FNKNLLRKVD…ELAKKLEEPY (89 aa)) form an alpha C-terminal domain (alpha-CTD) region.

This sequence belongs to the RNA polymerase alpha chain family. Homodimer. The RNAP catalytic core consists of 2 alpha, 1 beta, 1 beta' and 1 omega subunit. When a sigma factor is associated with the core the holoenzyme is formed, which can initiate transcription.

It catalyses the reaction RNA(n) + a ribonucleoside 5'-triphosphate = RNA(n+1) + diphosphate. DNA-dependent RNA polymerase catalyzes the transcription of DNA into RNA using the four ribonucleoside triphosphates as substrates. This chain is DNA-directed RNA polymerase subunit alpha, found in Paramagnetospirillum magneticum (strain ATCC 700264 / AMB-1) (Magnetospirillum magneticum).